Consider the following 556-residue polypeptide: Protein trichome birefringence-like 1 (556 aa).

The chain crosses the membrane as a helical; Signal-anchor for type II membrane protein span at residues 38 to 58 (TFVYAFVVTFVALTVFLAFSP). The short motif at 269 to 271 (GDS) is the GDS motif element. The short motif at 514 to 528 (DCSHWCLPGVPDSWN) is the DCXHWCLPGXXDXWN motif element.

The protein belongs to the PC-esterase family. TBL subfamily. In terms of tissue distribution, not expressed in trichomes.

It localises to the membrane. Functionally, can complement TBR and is therefore functionally equivalent, but may work in different tissue. May act as a bridging protein that binds pectin and other cell wall polysaccharides. Probably involved in maintaining esterification of pectins. May be involved in the specific O-acetylation of cell wall polymers. The chain is Protein trichome birefringence-like 1 (TBL1) from Arabidopsis thaliana (Mouse-ear cress).